Reading from the N-terminus, the 88-residue chain is EMBRYO SURROUNDING FACTOR 1-like protein 3 (88 aa).

The signal sequence occupies residues 1–22 (MKLSQIALICIVIASLFAMHEC). Disulfide bonds link cysteine 41-cysteine 56, cysteine 54-cysteine 80, and cysteine 57-cysteine 67.

Belongs to the MEG family. Expressed in stems, leaves and flowers.

The sequence is that of EMBRYO SURROUNDING FACTOR 1-like protein 3 (ESFL3) from Arabidopsis thaliana (Mouse-ear cress).